The chain runs to 89 residues: Small ribosomal subunit protein uS15 (89 aa).

Over residues 1-10 (MPLNTEKKQE) the composition is skewed to basic and acidic residues. Residues 1 to 22 (MPLNTEKKQELINSHQTHATDT) are disordered. Positions 11–22 (LINSHQTHATDT) are enriched in polar residues.

It belongs to the universal ribosomal protein uS15 family. Part of the 30S ribosomal subunit. Forms a bridge to the 50S subunit in the 70S ribosome, contacting the 23S rRNA.

Functionally, one of the primary rRNA binding proteins, it binds directly to 16S rRNA where it helps nucleate assembly of the platform of the 30S subunit by binding and bridging several RNA helices of the 16S rRNA. Its function is as follows. Forms an intersubunit bridge (bridge B4) with the 23S rRNA of the 50S subunit in the ribosome. In Synechococcus sp. (strain RCC307), this protein is Small ribosomal subunit protein uS15.